A 360-amino-acid polypeptide reads, in one-letter code: Phospho-N-acetylmuramoyl-pentapeptide-transferase (360 aa).

10 consecutive transmembrane segments (helical) span residues Y21–G41, T73–L93, I98–W118, W132–G152, V168–S188, G199–T219, A236–Y256, V263–L283, L288–V308, and V338–K358.

It belongs to the glycosyltransferase 4 family. MraY subfamily. Mg(2+) serves as cofactor.

It localises to the cell inner membrane. It carries out the reaction UDP-N-acetyl-alpha-D-muramoyl-L-alanyl-gamma-D-glutamyl-meso-2,6-diaminopimeloyl-D-alanyl-D-alanine + di-trans,octa-cis-undecaprenyl phosphate = di-trans,octa-cis-undecaprenyl diphospho-N-acetyl-alpha-D-muramoyl-L-alanyl-D-glutamyl-meso-2,6-diaminopimeloyl-D-alanyl-D-alanine + UMP. Its pathway is cell wall biogenesis; peptidoglycan biosynthesis. Catalyzes the initial step of the lipid cycle reactions in the biosynthesis of the cell wall peptidoglycan: transfers peptidoglycan precursor phospho-MurNAc-pentapeptide from UDP-MurNAc-pentapeptide onto the lipid carrier undecaprenyl phosphate, yielding undecaprenyl-pyrophosphoryl-MurNAc-pentapeptide, known as lipid I. The sequence is that of Phospho-N-acetylmuramoyl-pentapeptide-transferase from Actinobacillus pleuropneumoniae serotype 5b (strain L20).